A 151-amino-acid polypeptide reads, in one-letter code: MTGLERQLTEMLESAVVASGYELVGLEFIRAGEHSTLRIYIDHENGITVEDCAEVSHQVSAVLDVEDPISVAYSLEVSSPGLDRPLFKPAHYEQFIGQEVNVVLKMAVANRRKWKGEIHSVDGEAITLTVDGQQEEFALSNISKANLIPKF.

The protein belongs to the RimP family.

It localises to the cytoplasm. Its function is as follows. Required for maturation of 30S ribosomal subunits. In Vibrio vulnificus (strain CMCP6), this protein is Ribosome maturation factor RimP.